A 502-amino-acid polypeptide reads, in one-letter code: Glycerol kinase (502 aa).

Thr14 lines the ADP pocket. Positions 14, 15, and 16 each coordinate ATP. Thr14 contributes to the sn-glycerol 3-phosphate binding site. Arg18 is an ADP binding site. Sn-glycerol 3-phosphate-binding residues include Arg84, Glu85, Tyr136, and Asp246. The glycerol site is built by Arg84, Glu85, Tyr136, Asp246, and Gln247. Residues Thr268 and Gly311 each coordinate ADP. The ATP site is built by Thr268, Gly311, Gln315, and Gly412. Positions 412 and 416 each coordinate ADP.

The protein belongs to the FGGY kinase family.

The enzyme catalyses glycerol + ATP = sn-glycerol 3-phosphate + ADP + H(+). It functions in the pathway polyol metabolism; glycerol degradation via glycerol kinase pathway; sn-glycerol 3-phosphate from glycerol: step 1/1. Inhibited by fructose 1,6-bisphosphate (FBP). Its function is as follows. Key enzyme in the regulation of glycerol uptake and metabolism. Catalyzes the phosphorylation of glycerol to yield sn-glycerol 3-phosphate. This is Glycerol kinase from Pasteurella multocida (strain Pm70).